The following is a 257-amino-acid chain: Discoidin-2 (257 aa).

Residues 1-155 (MSVPAGSVSC…SLRWELYALP (155 aa)) are beta-sandwich. Residues 10–154 (CLANALLNLR…ISLRWELYAL (145 aa)) form the F5/8 type C domain. N39, S40, and D47 together coordinate Ca(2+). The Cell attachment site motif lies at 81–83 (RGD). H84 bears the Phosphohistidine mark. The linker stretch occupies residues 156–162 (VKSYSNP). The tract at residues 163–257 (SVQVGEVSIG…FDYVAVEFNN (95 aa)) is lectin-like. A carbohydrate is bound by residues D209, R218, and W238.

Homotrimer. In terms of processing, the N-terminus is blocked. Maturing spore cells.

In terms of biological role, galactose-binding lectin. May be necessary for the primary process of spore formation and may be involved in spore coat formation. This chain is Discoidin-2 (dscE), found in Dictyostelium discoideum (Social amoeba).